Consider the following 197-residue polypeptide: Protein SPMIP2 (197 aa).

The disordered stretch occupies residues 161–197 (SKAALPIGSRPPKLPKLPKKEEKSKFRPLHQHDARCY). Positions 178–197 (PKKEEKSKFRPLHQHDARCY) are enriched in basic and acidic residues.

The polypeptide is Protein SPMIP2 (SPMIP2) (Bos taurus (Bovine)).